The sequence spans 116 residues: Large ribosomal subunit protein bL20 (116 aa).

This sequence belongs to the bacterial ribosomal protein bL20 family.

Its function is as follows. Binds directly to 23S ribosomal RNA and is necessary for the in vitro assembly process of the 50S ribosomal subunit. It is not involved in the protein synthesizing functions of that subunit. The sequence is that of Large ribosomal subunit protein bL20 from Bacteroides thetaiotaomicron (strain ATCC 29148 / DSM 2079 / JCM 5827 / CCUG 10774 / NCTC 10582 / VPI-5482 / E50).